Consider the following 152-residue polypeptide: Prostaglandin E synthase (152 aa).

Residues 1-12 (MPAHSLAMSSPA) are Lumenal-facing. The chain crosses the membrane as a helical span at residues 13 to 41 (LPAFLLCSTLLVIKMYVVAIITGQVRLRK). R38 serves as a coordination point for glutathione. The Cytoplasmic segment spans residues 42-60 (KAFANPEDALRHGGPQYCR). A helical transmembrane segment spans residues 61 to 90 (SDPDVERCLRAHRNDMETIYPFLFLGFVYS). 73-77 (RNDME) serves as a coordination point for glutathione. At 91–95 (FLGPN) the chain is on the lumenal side. Residues 96 to 119 (PFVAWMHFLVFLLGRVVHTVAYLG) traverse the membrane as a helical segment. Glutathione is bound by residues H113 and Y117. Residues 120 to 123 (KLRA) lie on the Cytoplasmic side of the membrane. Residues 124–152 (PIRSVTYTLAQLPCASMALQILWEAARHL) form a helical membrane-spanning segment. Residue 126 to 130 (RSVTY) coordinates glutathione.

Belongs to the MAPEG family. Homotrimer. Requires glutathione as cofactor.

The protein resides in the membrane. The protein localises to the cytoplasm. It is found in the perinuclear region. The catalysed reaction is prostaglandin H2 = prostaglandin E2. It carries out the reaction 2-glyceryl-prostaglandin H2 = 2-glyceryl-prostaglandin E2. It catalyses the reaction prostaglandin G2 = (15S)-15-hydroperoxy-prostaglandin E2. The enzyme catalyses 1-chloro-2,4-dinitrobenzene + glutathione = 2,4-dinitrophenyl-S-glutathione + chloride + H(+). The catalysed reaction is (5S)-hydroperoxy-(6E,8Z,11Z,14Z)-eicosatetraenoate + 2 glutathione = (5S)-hydroxy-(6E,8Z,11Z,14Z)-eicosatetraenoate + glutathione disulfide + H2O. Its pathway is lipid metabolism; prostaglandin biosynthesis. In terms of biological role, terminal enzyme of the cyclooxygenase (COX)-2-mediated prostaglandin E2 (PGE2) biosynthetic pathway. Catalyzes the glutathione-dependent oxidoreduction of prostaglandin endoperoxide H2 (PGH2) to prostaglandin E2 (PGE2) in response to inflammatory stimuli. Plays a key role in inflammation response, fever and pain. Also catalyzes the oxidoreduction of endocannabinoids into prostaglandin glycerol esters and PGG2 into 15-hydroperoxy-PGE2. In addition, displays low glutathione transferase and glutathione-dependent peroxidase activities, toward 1-chloro-2,4-dinitrobenzene and 5-hydroperoxyicosatetraenoic acid (5-HPETE), respectively. This is Prostaglandin E synthase (PTGES) from Macaca fascicularis (Crab-eating macaque).